The sequence spans 720 residues: Inactive serine protease PAMR1 (720 aa).

Positions 1-21 (MELGWWPQLGLAFLQLLLISS) are cleaved as a signal peptide. Cystine bridges form between C128-C150, C177-C199, C239-C250, C244-C260, C262-C271, C280-C329, C315-C342, and C414-C442. A CUB domain is found at 128–236 (CGQVLRVPKG…DGFHAIFEEI (109 aa)). Residues 235–272 (EITACSSSPCFHDGTCLLDSTGSYKCACLAGYTGKHCE) enclose the EGF-like domain. Sushi domains lie at 278–344 (RNCS…ICIK) and 387–444 (APTK…SCIP). A Peptidase S1 domain is found at 445–720 (ICGKTENVSA…FKDWIERNMK (276 aa)). N451 carries N-linked (GlcNAc...) asparagine glycosylation. 3 disulfide bridges follow: C489–C505, C630–C649, and C661–C697.

This sequence belongs to the peptidase S1 family.

It is found in the secreted. Its function is as follows. May play a role in regeneration of skeletal muscle. The chain is Inactive serine protease PAMR1 (PAMR1) from Bos taurus (Bovine).